Here is a 380-residue protein sequence, read N- to C-terminus: Putative 8-amino-7-oxononanoate synthase (380 aa).

A substrate-binding site is contributed by Arg-22. A pyridoxal 5'-phosphate-binding site is contributed by 109–110; that stretch reads GY. His-134 lines the substrate pocket. Pyridoxal 5'-phosphate-binding positions include Ser-182, 207 to 210, and 238 to 241; these read DEAH and TLSK. Residue Lys-241 is modified to N6-(pyridoxal phosphate)lysine. Substrate is bound at residue Thr-353.

The protein belongs to the class-II pyridoxal-phosphate-dependent aminotransferase family. BioF subfamily. In terms of assembly, homodimer. Pyridoxal 5'-phosphate is required as a cofactor.

The enzyme catalyses 6-carboxyhexanoyl-[ACP] + L-alanine + H(+) = (8S)-8-amino-7-oxononanoate + holo-[ACP] + CO2. It functions in the pathway cofactor biosynthesis; biotin biosynthesis. Catalyzes the decarboxylative condensation of pimeloyl-[acyl-carrier protein] and L-alanine to produce 8-amino-7-oxononanoate (AON), [acyl-carrier protein], and carbon dioxide. This chain is Putative 8-amino-7-oxononanoate synthase (bioF), found in Gloeothece citriformis (strain PCC 7424) (Cyanothece sp. (strain PCC 7424)).